The chain runs to 118 residues: Cell division protein FtsB (118 aa).

Residues 1-6 (MRNWRW) are Cytoplasmic-facing. A helical membrane pass occupies residues 7 to 24 (LLLVLAALLAWLQHRFWF). At 25–118 (GPGNSGEVRM…DLSQPRREKR (94 aa)) the chain is on the periplasmic side. Residues 30-66 (GEVRMLQVQIVQQHQENERLRQRNASLAAEVKNLKDG) adopt a coiled-coil conformation. The segment at 98–118 (LPNDTSADHGVDLSQPRREKR) is disordered. Residues 103–118 (SADHGVDLSQPRREKR) are compositionally biased toward basic and acidic residues.

Belongs to the FtsB family. As to quaternary structure, part of a complex composed of FtsB, FtsL and FtsQ.

The protein localises to the cell inner membrane. Essential cell division protein. May link together the upstream cell division proteins, which are predominantly cytoplasmic, with the downstream cell division proteins, which are predominantly periplasmic. The sequence is that of Cell division protein FtsB from Xylella fastidiosa (strain M12).